We begin with the raw amino-acid sequence, 316 residues long: Very long chain fatty acid elongase 6 (316 aa).

N-linked (GlcNAc...) asparagine glycosylation occurs at N11. The next 6 membrane-spanning stretches (helical) occupy residues 30 to 50, 64 to 84, 117 to 137, 142 to 162, 167 to 189, and 202 to 222; these read WMLE…LVIF, LRGP…MGAA, FWTW…IFIV, PLIF…WFSY, SSAR…YYAL, and MIIT…NVWA. N-linked (GlcNAc...) asparagine glycosylation occurs at N242. Residues 245 to 265 form a helical membrane-spanning segment; it reads IAMYSSYFVLFARFFYKAYLA.

This sequence belongs to the ELO family. ELOVL6 subfamily. As to expression, detected in the CNS (central nervous system) of third larval instar (at protein level). Expressed in cyst progenitor cells (at protein level). In the adult fly, expressed in several tissues including, sperm, follicular epithelium, nurse cells and cyst cells.

The protein resides in the mitochondrion outer membrane. The protein localises to the endoplasmic reticulum membrane. The enzyme catalyses a very-long-chain acyl-CoA + malonyl-CoA + H(+) = a very-long-chain 3-oxoacyl-CoA + CO2 + CoA. It carries out the reaction hexadecanoyl-CoA + malonyl-CoA + H(+) = 3-oxooctadecanoyl-CoA + CO2 + CoA. It participates in lipid metabolism; fatty acid biosynthesis. In terms of biological role, catalyzes the first and rate-limiting reaction of the four reactions that constitute the long-chain fatty acids elongation cycle. This process allows the addition of 2 carbons to the chain of long- and very long-chain fatty acids (VLCFAs) per cycle. Condensing enzyme that elongates fatty acids with 12, 14 and 16 carbons with higher activity toward C16:0 acyl-CoAs. Catalyzes the synthesis of unsaturated C16 long chain fatty acids and, to a lesser extent, C18:0 and those with low desaturation degree. May participate in the production of saturated and monounsaturated VLCFAs of different chain lengths that are involved in multiple biological processes as precursors of membrane lipids and lipid mediators. The polypeptide is Very long chain fatty acid elongase 6 (Drosophila melanogaster (Fruit fly)).